The primary structure comprises 451 residues: MQRHAIVLAAGKGTRMKSKKYKVLHDVAGKTMIEHVADNVKQSGIDQLVTIVGHGADSVKETLGDTSLYSFQEEQLGTAHAVKMASEHLSESQGTTLVVCGDTPLITTATLKSLVEHHENNQAHATVLSATAENPFGYGRILRDSEGRLVSIVEQKDATDAEQQINEISSGIFAFDNQVLFEKLELVKNDNAQSEYYLPDVLSLILEDRGIVEVFHTNDFEEIMGVNDRVMLSEAEKAFRKRINEQHMKNGVTIIDPVTTYIGADVRIGEDTVVEPGVKLSGNSVIGEDTVIGQHTEITNSKIGSNVTIKQSVINEAIVDDYATIGPFAQLRPGADLGKKVKVGNFVEVKKSVVKAGAKLPHLSYIGDAEIGERTNVGCGSITVNYDGINKFKTVIGDDSFIGCNTNLVAPITLGNRSFIAAGSTITDNVPEDSLALARARQTTKEGYLKK.

Residues 1–229 (MQRHAIVLAA…FEEIMGVNDR (229 aa)) are pyrophosphorylase. UDP-N-acetyl-alpha-D-glucosamine-binding positions include 8–11 (LAAG), Lys-22, Gln-72, and 77–78 (GT). Asp-102 is a binding site for Mg(2+). Residues Gly-139, Glu-154, and Asn-227 each contribute to the UDP-N-acetyl-alpha-D-glucosamine site. Asn-227 contributes to the Mg(2+) binding site. Positions 230 to 250 (VMLSEAEKAFRKRINEQHMKN) are linker. Residues 251 to 451 (GVTIIDPVTT…QTTKEGYLKK (201 aa)) are N-acetyltransferase. 2 residues coordinate UDP-N-acetyl-alpha-D-glucosamine: Arg-332 and Lys-350. The active-site Proton acceptor is the His-362. UDP-N-acetyl-alpha-D-glucosamine-binding residues include Tyr-365 and Asn-376. Residues 385 to 386 (NY), Ala-422, and Arg-439 contribute to the acetyl-CoA site.

This sequence in the N-terminal section; belongs to the N-acetylglucosamine-1-phosphate uridyltransferase family. It in the C-terminal section; belongs to the transferase hexapeptide repeat family. As to quaternary structure, homotrimer. Requires Mg(2+) as cofactor.

The protein localises to the cytoplasm. The catalysed reaction is alpha-D-glucosamine 1-phosphate + acetyl-CoA = N-acetyl-alpha-D-glucosamine 1-phosphate + CoA + H(+). The enzyme catalyses N-acetyl-alpha-D-glucosamine 1-phosphate + UTP + H(+) = UDP-N-acetyl-alpha-D-glucosamine + diphosphate. It participates in nucleotide-sugar biosynthesis; UDP-N-acetyl-alpha-D-glucosamine biosynthesis; N-acetyl-alpha-D-glucosamine 1-phosphate from alpha-D-glucosamine 6-phosphate (route II): step 2/2. It functions in the pathway nucleotide-sugar biosynthesis; UDP-N-acetyl-alpha-D-glucosamine biosynthesis; UDP-N-acetyl-alpha-D-glucosamine from N-acetyl-alpha-D-glucosamine 1-phosphate: step 1/1. Its pathway is bacterial outer membrane biogenesis; LPS lipid A biosynthesis. Its function is as follows. Catalyzes the last two sequential reactions in the de novo biosynthetic pathway for UDP-N-acetylglucosamine (UDP-GlcNAc). The C-terminal domain catalyzes the transfer of acetyl group from acetyl coenzyme A to glucosamine-1-phosphate (GlcN-1-P) to produce N-acetylglucosamine-1-phosphate (GlcNAc-1-P), which is converted into UDP-GlcNAc by the transfer of uridine 5-monophosphate (from uridine 5-triphosphate), a reaction catalyzed by the N-terminal domain. This chain is Bifunctional protein GlmU, found in Staphylococcus saprophyticus subsp. saprophyticus (strain ATCC 15305 / DSM 20229 / NCIMB 8711 / NCTC 7292 / S-41).